A 116-amino-acid polypeptide reads, in one-letter code: uncharacterized protein (116 aa).

A CHY-type zinc finger spans residues 1–72 (MCKHVLNAQV…SDEYCPNCDN (72 aa)). Zn(2+) is bound by residues Cys2, His4, Cys16, Cys17, Cys23, Cys26, His27, His33, Cys45, Cys48, Cys67, and Cys70.

It localises to the cytoplasm. This is an uncharacterized protein from Schizosaccharomyces pombe (strain 972 / ATCC 24843) (Fission yeast).